A 405-amino-acid polypeptide reads, in one-letter code: Syndecan-3 (405 aa).

Residues 1-22 form the signal peptide; the sequence is MPAELRRLAVLLLLLSARAALA. The Extracellular portion of the chain corresponds to 23–347; the sequence is QPWRNENYER…PQKNILERKE (325 aa). The tract at residues 31-59 is disordered; it reads ERPVDLEGSGDDDPFGDDELDDIYSGSGS. The span at 38 to 52 shows a compositional bias: acidic residues; it reads GSGDDDPFGDDELDD. O-linked (Xyl...) (glycosaminoglycan) serine glycans are attached at residues Ser39, Ser55, Ser57, Ser59, and Ser66. Disordered regions lie at residues 134 to 159 and 191 to 301; these read TTTA…ATTT and TRAT…ELGN. A compositionally biased stretch (low complexity) spans 191–201; that stretch reads TRATTLETPTT. Positions 202-237 are enriched in polar residues; that stretch reads SIPETSVLTEVTTSRLVPSSTAKPRSLPKPSTSRTA. Ser280, Ser283, and Ser330 each carry an O-linked (Xyl...) (glycosaminoglycan) serine glycan. The chain crosses the membrane as a helical span at residues 348–372; it reads VLIAVIVGGVVGALFAAFLVMLLIY. The Cytoplasmic segment spans residues 373–405; the sequence is RMKKKDEGSYTLEEPKQANVTYQKPDKQEEFYA.

This sequence belongs to the syndecan proteoglycan family. Post-translationally, O-glycosylated within the Thr/Ser-rich region which could interact with lectin domains on other molecules. As to expression, proximal chondrogenic central core of embryonic limb buds where cartilage differentiation is being initiated.

The protein localises to the membrane. Cell surface proteoglycan that may bear both heparan sulfate and chondroitin sulfate. The multiple functional domains provide potential sites for mediating the adhesive cell-matrix interactions and cytoskeletal reorganization involved in limb chondrogenesis. Interaction with other matrix ligands as well as phosphorylation and shedding of the ectodomain might be involved in cell shape changes that occur during chondrogenesis. Furthermore, shedding of the ectodomain might break the adhesive interactions that promoted condensation, thus facilitating the deposition of cartilage matrix molecules. The sequence is that of Syndecan-3 (SDC3) from Gallus gallus (Chicken).